Here is a 134-residue protein sequence, read N- to C-terminus: ATP synthase epsilon chain (134 aa).

The protein belongs to the ATPase epsilon chain family. F-type ATPases have 2 components, CF(1) - the catalytic core - and CF(0) - the membrane proton channel. CF(1) has five subunits: alpha(3), beta(3), gamma(1), delta(1), epsilon(1). CF(0) has three main subunits: a, b and c.

The protein resides in the cell membrane. Functionally, produces ATP from ADP in the presence of a proton gradient across the membrane. The chain is ATP synthase epsilon chain from Staphylococcus aureus (strain USA300).